The chain runs to 500 residues: Trehalose-6-phosphate synthase (500 aa).

A D-glucose 6-phosphate-binding site is contributed by arginine 28. 48–49 (GG) lines the UDP-alpha-D-glucose pocket. D-glucose 6-phosphate contacts are provided by tyrosine 108 and aspartate 162. 2 residues coordinate UDP-alpha-D-glucose: arginine 304 and lysine 309. Arginine 342 contributes to the D-glucose 6-phosphate binding site. 407–411 (LVAKE) serves as a coordination point for UDP-alpha-D-glucose.

The protein belongs to the glycosyltransferase 20 family. In terms of assembly, homotetramer.

The enzyme catalyses ADP-alpha-D-glucose + D-glucose 6-phosphate = alpha,alpha-trehalose 6-phosphate + ADP + H(+). It carries out the reaction CDP-alpha-D-glucose + D-glucose 6-phosphate = alpha,alpha-trehalose 6-phosphate + CDP + H(+). The catalysed reaction is GDP-alpha-D-glucose + D-glucose 6-phosphate = alpha,alpha-trehalose 6-phosphate + GDP + H(+). It catalyses the reaction TDP-alpha-D-glucose + D-glucose 6-phosphate = 5-methyl-UDP + alpha,alpha-trehalose 6-phosphate + H(+). The enzyme catalyses D-glucose 6-phosphate + UDP-alpha-D-glucose = alpha,alpha-trehalose 6-phosphate + UDP + H(+). The protein operates within glycan biosynthesis; trehalose biosynthesis. Its function is as follows. Probably involved in the osmoprotection via the biosynthesis of trehalose and in the production of glycogen and alpha-glucan via the TreS-Pep2 branch involved in the biosynthesis of maltose-1-phosphate (M1P). Catalyzes the transfer of glucose from UDP-glucose (UDP-Glc) to D-glucose 6-phosphate (Glc-6-P) to form trehalose-6-phosphate. Probably also able to use ADP-Glc, CDP-Glc, GDP-Glc and TDP-Glc as glucosyl donors. The chain is Trehalose-6-phosphate synthase from Mycobacterium tuberculosis (strain CDC 1551 / Oshkosh).